We begin with the raw amino-acid sequence, 621 residues long: Chaperone protein HscA homolog (621 aa).

It belongs to the heat shock protein 70 family.

In terms of biological role, chaperone involved in the maturation of iron-sulfur cluster-containing proteins. Has a low intrinsic ATPase activity which is markedly stimulated by HscB. This is Chaperone protein HscA homolog from Cupriavidus metallidurans (strain ATCC 43123 / DSM 2839 / NBRC 102507 / CH34) (Ralstonia metallidurans).